The chain runs to 2161 residues: DNA polymerase epsilon catalytic subunit A (2161 aa).

3 short sequence motifs (nuclear localization signal) span residues Asn5 to Asp12, His1137 to Asp1144, and Leu1239 to Val1246. Zn(2+) contacts are provided by Cys2038, Cys2041, Cys2063, and Cys2068. Residues Cys2038–Cys2068 form a CysA-type zinc finger. Positions 2099, 2102, 2114, and 2116 each coordinate [4Fe-4S] cluster. Residues Cys2099–Cys2116 carry the CysB motif motif. Residues Ser2130–Met2137 carry the Nuclear localization signal 4 motif.

The protein belongs to the DNA polymerase type-B family. In terms of assembly, heterotetramer. Subunit of the DNA polymerase II. Interacts (via C-terminus) with DPB2. Interacts with LHP1/TFL2. It depends on [4Fe-4S] cluster as a cofactor. As to expression, mostly expressed at low levels in inflorescence (floral meristem and flowers until anthesis), and, to a lower extent, in roots, seeds and leaves.

The protein localises to the nucleus. The catalysed reaction is DNA(n) + a 2'-deoxyribonucleoside 5'-triphosphate = DNA(n+1) + diphosphate. In terms of biological role, DNA polymerase II, which participates in chromosomal DNA replication. Required for the timing and determination of cell fate during plant embryogenesis and root pole development, by promoting cell cycle and cell type patterning. Necessary for proper shoot (SAM) and root apical meristem (RAM) functions. Involved in maintaining epigenetic states, controlling hypersensitive response (HR), and mediating abscisic acid (ABA) signaling. Required for flowering repression through a mechanism involving epigenetic gene silencing. May participate in processes involved in chromatin-mediated cellular memory. The polypeptide is DNA polymerase epsilon catalytic subunit A (POL2A) (Arabidopsis thaliana (Mouse-ear cress)).